A 236-amino-acid chain; its full sequence is LexA repressor (236 aa).

The segment at residues 26-46 (FDEMKDALDLRSKSGIHRLII) is a DNA-binding region (H-T-H motif). Catalysis depends on for autocatalytic cleavage activity residues Ser157 and Lys195.

The protein belongs to the peptidase S24 family. As to quaternary structure, homodimer.

The catalysed reaction is Hydrolysis of Ala-|-Gly bond in repressor LexA.. Functionally, represses a number of genes involved in the response to DNA damage (SOS response), including recA and lexA. In the presence of single-stranded DNA, RecA interacts with LexA causing an autocatalytic cleavage which disrupts the DNA-binding part of LexA, leading to derepression of the SOS regulon and eventually DNA repair. The polypeptide is LexA repressor (Methylocella silvestris (strain DSM 15510 / CIP 108128 / LMG 27833 / NCIMB 13906 / BL2)).